The chain runs to 463 residues: MNKVRTRYAPSPTGYLHIGGARTALFCYLFAKHYNGTFVFRLEDTDVKRNVADGERSQLENLKWLGIIPDESPLNPNEKYGKYRQSEKLERYRQIANELVQKGLAYKSYDTSEELEMQHSEAEKNGIASFRYDKNWLKISEEEKQKRDKAGEYSIRFSMPKDVVYEWDDIVRGKISFDSNDIGDWVIQKSDGYPTYNFAVVVDDFDMEITHVLRGEEHITNTPRQLSIYNALGWKAPEFGHLTVITNMEGKKLSKRDTSLKQFIEDYKNDGYDPHAIFNFLSLLGWTSADNSEVMTHDEIIAKFEPSRLSKSPSKFDIKKMQWFSKQYIKNMDNESIINKLNLNNDEWTNLFVDTFKQSVFALKQLLVEKENYDKPSETAPSLTQADLEVVLSFKNEFQNKDFTISQIQEAIDQVAFKTGKKGKNLFMPIRLATTYIEHGPELAKSIYLFGKDIILKRLSQWN.

The short motif at 10–20 (PSPTGYLHIGG) is the 'HIGH' region element. Positions 252–256 (KLSKR) match the 'KMSKS' region motif. K255 contributes to the ATP binding site.

Belongs to the class-I aminoacyl-tRNA synthetase family. Glutamate--tRNA ligase type 1 subfamily. Monomer.

The protein resides in the cytoplasm. The catalysed reaction is tRNA(Glu) + L-glutamate + ATP = L-glutamyl-tRNA(Glu) + AMP + diphosphate. Catalyzes the attachment of glutamate to tRNA(Glu) in a two-step reaction: glutamate is first activated by ATP to form Glu-AMP and then transferred to the acceptor end of tRNA(Glu). The protein is Glutamate--tRNA ligase of Mycoplasmopsis agalactiae (strain NCTC 10123 / CIP 59.7 / PG2) (Mycoplasma agalactiae).